Here is a 402-residue protein sequence, read N- to C-terminus: Hyaluronan and proteoglycan link protein 4 (402 aa).

The first 29 residues, 1–29 (MVCARAALGPGALWAAAWGVLLLTAPAGA), serve as a signal peptide directing secretion. Residues 46–161 (SVVVQTAPGQ…DAGMVKLDLE (116 aa)) form the Ig-like C2-type domain. 5 disulfides stabilise this stretch: Cys-68/Cys-143, Cys-185/Cys-266, Cys-209/Cys-230, Cys-293/Cys-363, and Cys-318/Cys-339. N-linked (GlcNAc...) asparagine glycosylation is present at Asn-132. 2 Link domains span residues 163–268 (VVFP…FCFT) and 273–365 (GRVF…YCYR).

The protein belongs to the HAPLN family. Expressed predominantly in brain.

The protein localises to the secreted. Its subcellular location is the extracellular space. It is found in the extracellular matrix. Its function is as follows. Essential for the proper localization of brevican (BCAN), mainly as a perineuronal nets (PNNs)-type deposition in the brainstem and cerebellum thereby playing a key role in the formation and structural organization of PNNs. Contributes to the formation and transmission of inhibitory GABAergic synapses between Purkinje cells and deep cerebellar nuclei neurons. This chain is Hyaluronan and proteoglycan link protein 4 (HAPLN4), found in Homo sapiens (Human).